Here is a 265-residue protein sequence, read N- to C-terminus: Keratinocyte-associated transmembrane protein 2 (265 aa).

The N-terminal stretch at 1-49 is a signal peptide; sequence MAAAALKRMRGPAQAKLLPGSAIQALVGLARPLVLALLLVSAALSSVVS. Residues 50–196 lie on the Extracellular side of the membrane; the sequence is RTDSPSPTVL…MPSSNIEEED (147 aa). The segment covering 72 to 96 has biased composition (polar residues); sequence THENQTKPSISQISTTLPPTMSTEK. 2 disordered regions span residues 72–123 and 135–168; these read THEN…EDPS and SPSTAKDTLDNGDYGEPDYDWTTGPRDDDESDDT. The N-linked (GlcNAc...) asparagine glycan is linked to asparagine 75. The span at 114 to 123 shows a compositional bias: acidic residues; the sequence is EEADNNEDPS. A helical membrane pass occupies residues 197–217; that stretch reads SHFFFHLIIFAFCIAVVYITY. Over 218–265 the chain is Cytoplasmic; sequence HNKRKIFLLVQSRKWRDGLCSKTVEYHRLDQNVNEAMPSLKITNDYTF. Serine 229 and serine 256 each carry phosphoserine.

It is found in the membrane. This is Keratinocyte-associated transmembrane protein 2 (KCT2) from Pongo abelii (Sumatran orangutan).